Consider the following 958-residue polypeptide: Protein translocase subunit SecA (958 aa).

Residues glutamine 86, 104–108 (GEGKT), and aspartate 494 contribute to the ATP site. 2 disordered regions span residues 863-883 (AAATGESAPAEPETDDEAEKT) and 902-937 (QPISHAEGKVPANKRPKSEELHSPWADGRTFPGTGK). The Zn(2+) site is built by cysteine 941, cysteine 943, cysteine 952, and histidine 953.

It belongs to the SecA family. Monomer and homodimer. Part of the essential Sec protein translocation apparatus which comprises SecA, SecYEG and auxiliary proteins SecDF. Other proteins may also be involved. Requires Zn(2+) as cofactor.

It is found in the cell membrane. It localises to the cytoplasm. The enzyme catalyses ATP + H2O + cellular proteinSide 1 = ADP + phosphate + cellular proteinSide 2.. Functionally, part of the Sec protein translocase complex. Interacts with the SecYEG preprotein conducting channel. Has a central role in coupling the hydrolysis of ATP to the transfer of proteins into and across the cell membrane, serving as an ATP-driven molecular motor driving the stepwise translocation of polypeptide chains across the membrane. This Bifidobacterium adolescentis (strain ATCC 15703 / DSM 20083 / NCTC 11814 / E194a) protein is Protein translocase subunit SecA.